The primary structure comprises 78 residues: uncharacterized protein (78 aa).

Positions 49 to 78 (QRASLERSNSIRNLQSQGKRRSDSKESRKL) are disordered. The span at 54–65 (ERSNSIRNLQSQ) shows a compositional bias: polar residues. Basic and acidic residues predominate over residues 68–78 (RRSDSKESRKL).

This is an uncharacterized protein from Saccharomyces cerevisiae (strain ATCC 204508 / S288c) (Baker's yeast).